Consider the following 82-residue polypeptide: Small ribosomal subunit protein bS18 (82 aa).

Residues 1 to 20 (MVDINQIPTRRPFHRRRKTC) are disordered.

Belongs to the bacterial ribosomal protein bS18 family. Part of the 30S ribosomal subunit. Forms a tight heterodimer with protein bS6.

Its function is as follows. Binds as a heterodimer with protein bS6 to the central domain of the 16S rRNA, where it helps stabilize the platform of the 30S subunit. This chain is Small ribosomal subunit protein bS18, found in Brucella abortus (strain 2308).